The following is a 233-amino-acid chain: Small ribosomal subunit protein uS2 (233 aa).

Belongs to the universal ribosomal protein uS2 family.

In Clostridium botulinum (strain Eklund 17B / Type B), this protein is Small ribosomal subunit protein uS2.